A 383-amino-acid polypeptide reads, in one-letter code: MKNKLPPFIEIYRALIATPSISATEEALDQSNADLITLLADWFKDLGFNVEVQPVPGTRNKFNMLASIGQGAGGLLLAGHTDTVPFDDGRWTRDPFTLTEHDGKLYGLGTADMKGFFAFILDALRDIDVTKLKKPLYILATADEETSMAGARYFAETTALRPDCAIIGEPTSLQPVRAHKGHISNAIRIQGQSGHSSDPARGVNAIELMHDAIGHILQLRDNLKERYHYEAFTVPYPTLNLGHIHGGDASNRICACCELHMDIRPLPGMTLNELNGLLNDALAPVIERWPGRLTVDELHPPIPGYECPPNHQLVEVVEKLLGAKTEVVNYCTEAPFIQTLCPTLVLGPGSINQAHQPDEYLETRFIKPTRELIIQVIHHFCWH.

Histidine 80 contacts Zn(2+). Residue aspartate 82 is part of the active site. Residue aspartate 112 coordinates Zn(2+). Residue glutamate 144 is part of the active site. The Zn(2+) site is built by glutamate 145, glutamate 169, and histidine 355.

It belongs to the peptidase M20A family. ArgE subfamily. Homodimer. Zn(2+) is required as a cofactor. It depends on Co(2+) as a cofactor. The cofactor is glutathione.

It localises to the cytoplasm. It catalyses the reaction N(2)-acetyl-L-ornithine + H2O = L-ornithine + acetate. The protein operates within amino-acid biosynthesis; L-arginine biosynthesis; L-ornithine from N(2)-acetyl-L-ornithine (linear): step 1/1. In terms of biological role, catalyzes the hydrolysis of the amide bond of N(2)-acetylated L-amino acids. Cleaves the acetyl group from N-acetyl-L-ornithine to form L-ornithine, an intermediate in L-arginine biosynthesis pathway, and a branchpoint in the synthesis of polyamines. This chain is Acetylornithine deacetylase, found in Shigella boydii serotype 4 (strain Sb227).